Here is a 348-residue protein sequence, read N- to C-terminus: Elongation factor Ts (348 aa).

Residues 80–83 (TDFV) form an involved in Mg(2+) ion dislocation from EF-Tu region.

Belongs to the EF-Ts family.

It localises to the cytoplasm. Its function is as follows. Associates with the EF-Tu.GDP complex and induces the exchange of GDP to GTP. It remains bound to the aminoacyl-tRNA.EF-Tu.GTP complex up to the GTP hydrolysis stage on the ribosome. This Streptococcus mutans serotype c (strain ATCC 700610 / UA159) protein is Elongation factor Ts.